Consider the following 541-residue polypeptide: MTTVSDFTAHQTATAVVARKGTAGPRPSAVDAPATLTDEHGDVYVEPGLTPLAAREANRSALVGLLDAAGVGHFAVRGTVDHGTVVGVAEEDRERALQAVFRGLGQYPGHLSVVDPDAPRPAKPVSSRDPRAWREVVGARILQVSWYRTDPGRHLLLGHEYGCALEFWRRQGTCLVAPRANRATWAVAVGGPNVMGAARLFSRFVSDWTPGHLAPALPTRPEFLVNCADDIAFPVDAVYTWVDGNDPAWKQRKAQAKGEVYHAESASDARFISRDELRYSIRSLHLFAPWIRNIYVVTDDQVPAWMREDLPGARIATHREIFRNPEDLPTFNSHSIESQLHHIEGLAEHFLYFNDDMFMGRPVAPHSFFTPNGTARYFPSRNRIPQGAVAETDSPVDAACKNNRALLHERFGKVITQPMEHIPYALRRSAMAEAELEFPEAWARTSASRFRAMTDLSPTSSFALYYAALTGRAQPGSMPFTYIQLAVPDLADRLQRLLDGRDQDSFCLNDAFSTPEDTEAQQELLDDFFTSYFPTPSPYER.

This sequence belongs to the stealth family.

The protein is Exopolysaccharide phosphotransferase SCO6021 of Streptomyces coelicolor (strain ATCC BAA-471 / A3(2) / M145).